Reading from the N-terminus, the 241-residue chain is Methylthioribulose-1-phosphate dehydratase (241 aa).

Substrate is bound at residue cysteine 102. Zn(2+)-binding residues include histidine 120, histidine 122, and histidine 199.

It belongs to the aldolase class II family. MtnB subfamily. Zn(2+) is required as a cofactor.

The protein resides in the cytoplasm. It carries out the reaction 5-(methylsulfanyl)-D-ribulose 1-phosphate = 5-methylsulfanyl-2,3-dioxopentyl phosphate + H2O. It functions in the pathway amino-acid biosynthesis; L-methionine biosynthesis via salvage pathway; L-methionine from S-methyl-5-thio-alpha-D-ribose 1-phosphate: step 2/6. Catalyzes the dehydration of methylthioribulose-1-phosphate (MTRu-1-P) into 2,3-diketo-5-methylthiopentyl-1-phosphate (DK-MTP-1-P). This chain is Methylthioribulose-1-phosphate dehydratase, found in Coprinopsis cinerea (strain Okayama-7 / 130 / ATCC MYA-4618 / FGSC 9003) (Inky cap fungus).